The sequence spans 327 residues: Tagatose 1,6-diphosphate aldolase 2 (327 aa).

This sequence belongs to the aldolase LacD family.

The catalysed reaction is D-tagatofuranose 1,6-bisphosphate = D-glyceraldehyde 3-phosphate + dihydroxyacetone phosphate. The protein operates within carbohydrate metabolism; D-tagatose 6-phosphate degradation; D-glyceraldehyde 3-phosphate and glycerone phosphate from D-tagatose 6-phosphate: step 2/2. This Streptococcus pyogenes serotype M6 (strain ATCC BAA-946 / MGAS10394) protein is Tagatose 1,6-diphosphate aldolase 2.